The sequence spans 103 residues: MCLRVLDLRIPKVIITYCPKCRTHTEHSVTIYKHGKRRSLSEGERRYARKKKGYGSKRKPEQKRFAKVTKKTVLKLKCSKCGYIIHREGIRLKKAELVEVGGR.

Zn(2+)-binding residues include Cys-18 and Cys-21. Residues 18 to 81 form a C4-type zinc finger; it reads CPKCRTHTEH…TVLKLKCSKC (64 aa). A disordered region spans residues 40–62; that stretch reads LSEGERRYARKKKGYGSKRKPEQ. The segment covering 47 to 57 has biased composition (basic residues); the sequence is YARKKKGYGSK. Zn(2+) is bound by residues Cys-78 and Cys-81.

This sequence belongs to the eukaryotic ribosomal protein eL42 family. In terms of assembly, part of the 50S ribosomal subunit. Zn(2+) serves as cofactor.

Functionally, binds to the 23S rRNA. The protein is Large ribosomal subunit protein eL42 of Desulfurococcus amylolyticus (strain DSM 18924 / JCM 16383 / VKM B-2413 / 1221n) (Desulfurococcus kamchatkensis).